Consider the following 204-residue polypeptide: High mobility group-T protein (204 aa).

DNA-binding regions (HMG box) lie at residues 8-78 (PRGK…RSYI) and 94-162 (PKRP…TAYR). The tract at residues 162 to 204 (RNKGKVPVSMPAKAAAPAKDDDDDDDDDDDDEDDDDDDDEDDE) is disordered. A compositionally biased stretch (acidic residues) spans 181–204 (DDDDDDDDDDDDEDDDDDDDEDDE).

Belongs to the HMGB family.

It localises to the nucleus. The protein resides in the chromosome. In terms of biological role, binds preferentially single-stranded DNA and unwinds double-stranded DNA. The polypeptide is High mobility group-T protein (Oncorhynchus mykiss (Rainbow trout)).